The sequence spans 69 residues: Putative antitoxin AF_1481 (69 aa).

Belongs to the UPF0330 family.

Its function is as follows. Possibly the antitoxin component of a type II toxin-antitoxin (TA) system. The polypeptide is Putative antitoxin AF_1481 (Archaeoglobus fulgidus (strain ATCC 49558 / DSM 4304 / JCM 9628 / NBRC 100126 / VC-16)).